The primary structure comprises 119 residues: Protein yippee-like 1 (119 aa).

The region spanning 19 to 116 (RTYSCIHCRA…IELAHMIKDN (98 aa)) is the Yippee domain. Zn(2+) is bound by residues cysteine 23, cysteine 26, cysteine 79, and cysteine 82. A Nuclear localization signal motif is present at residues 99-104 (KYKEGK).

This sequence belongs to the yippee family.

The protein localises to the nucleus. Functionally, may play a role in epithelioid conversion of fibroblasts. The polypeptide is Protein yippee-like 1 (YPEL1) (Chlorocebus aethiops (Green monkey)).